Reading from the N-terminus, the 571-residue chain is Translation initiation factor IF-2 (571 aa).

The tr-type G domain maps to 71-239 (RRPPVVVIMG…ILLLAELEDY (169 aa)). The G1 stretch occupies residues 80–87 (GHVDHGKT). 80–87 (GHVDHGKT) serves as a coordination point for GTP. The G2 stretch occupies residues 105-109 (GITQH). The G3 stretch occupies residues 126 to 129 (DTPG). GTP-binding positions include 126–130 (DTPGH) and 180–183 (NKID). The interval 180-183 (NKID) is G4. Residues 216–218 (SAK) form a G5 region.

It belongs to the TRAFAC class translation factor GTPase superfamily. Classic translation factor GTPase family. IF-2 subfamily.

The protein localises to the cytoplasm. One of the essential components for the initiation of protein synthesis. Protects formylmethionyl-tRNA from spontaneous hydrolysis and promotes its binding to the 30S ribosomal subunits. Also involved in the hydrolysis of GTP during the formation of the 70S ribosomal complex. The sequence is that of Translation initiation factor IF-2 from Thermus thermophilus (strain ATCC BAA-163 / DSM 7039 / HB27).